The sequence spans 171 residues: Transcription antitermination protein NusB (171 aa).

Belongs to the NusB family.

Functionally, involved in transcription antitermination. Required for transcription of ribosomal RNA (rRNA) genes. Binds specifically to the boxA antiterminator sequence of the ribosomal RNA (rrn) operons. This is Transcription antitermination protein NusB from Brucella melitensis biotype 1 (strain ATCC 23456 / CCUG 17765 / NCTC 10094 / 16M).